The following is a 120-amino-acid chain: Small ribosomal subunit protein uS13 (120 aa).

The tract at residues 92-120 is disordered; it reads HRKGLPVRGQTTKNNARTRKGKKKTVGSK. A compositionally biased stretch (basic residues) spans 107-120; the sequence is ARTRKGKKKTVGSK.

The protein belongs to the universal ribosomal protein uS13 family. In terms of assembly, part of the 30S ribosomal subunit. Forms a loose heterodimer with protein S19. Forms two bridges to the 50S subunit in the 70S ribosome.

Its function is as follows. Located at the top of the head of the 30S subunit, it contacts several helices of the 16S rRNA. In the 70S ribosome it contacts the 23S rRNA (bridge B1a) and protein L5 of the 50S subunit (bridge B1b), connecting the 2 subunits; these bridges are implicated in subunit movement. Contacts the tRNAs in the A and P-sites. This is Small ribosomal subunit protein uS13 from Helicobacter hepaticus (strain ATCC 51449 / 3B1).